We begin with the raw amino-acid sequence, 338 residues long: Malate dehydrogenase, mitochondrial (338 aa).

The transit peptide at 1–24 (MLSALARPVGAALRRSFSTSAQNN) directs the protein to the mitochondrion. Residues 31-37 (GASGGIG) and Asp-57 contribute to the NAD(+) site. Ser-33 is a glycosylation site (O-linked (GlcNAc) serine). 2 positions are modified to N6-acetyllysine; alternate: Lys-78 and Lys-91. 2 positions are modified to N6-succinyllysine; alternate: Lys-78 and Lys-91. The substrate site is built by Arg-104 and Arg-110. Residues Asn-117 and 140-142 (ISN) each bind NAD(+). Asn-142 contacts substrate. Lys-165 carries the post-translational modification N6-acetyllysine. Residue Arg-176 participates in substrate binding. N6-acetyllysine; alternate is present on Lys-185. Lys-185 is subject to N6-succinyllysine; alternate. His-200 acts as the Proton acceptor in catalysis. Position 203 is an N6-succinyllysine (Lys-203). Residues Lys-215 and Lys-239 each carry the N6-acetyllysine; alternate modification. N6-succinyllysine; alternate occurs at positions 215 and 239. Lys-239 bears the N6-malonyllysine; alternate mark. Ser-246 is subject to Phosphoserine. Met-251 provides a ligand contact to NAD(+). Residue Lys-269 is modified to N6-succinyllysine. N6-acetyllysine; alternate is present on residues Lys-296, Lys-301, Lys-307, Lys-314, and Lys-324. 5 positions are modified to N6-succinyllysine; alternate: Lys-296, Lys-301, Lys-307, Lys-314, and Lys-324. Lys-307 carries the post-translational modification N6-malonyllysine; alternate. Residue Ser-326 is modified to Phosphoserine. N6-acetyllysine; alternate occurs at positions 328, 329, and 335. At Lys-328 the chain carries N6-succinyllysine; alternate. An N6-malonyllysine; alternate modification is found at Lys-329. An N6-succinyllysine; alternate modification is found at Lys-335.

Belongs to the LDH/MDH superfamily. MDH type 1 family. Homodimer. Post-translationally, acetylation is enhanced after treatment either with trichostin A (TCA) or with nicotinamide (NAM) with the appearance of tri- and tetraacetylations. Glucose also increases acetylation. In terms of tissue distribution, expressed in flagella of epididymal sperm.

Its subcellular location is the mitochondrion matrix. It catalyses the reaction (S)-malate + NAD(+) = oxaloacetate + NADH + H(+). Enzyme activity is enhanced by acetylation. This is Malate dehydrogenase, mitochondrial (Mdh2) from Rattus norvegicus (Rat).